Reading from the N-terminus, the 360-residue chain is Peptide chain release factor 1 (360 aa).

Gln-237 bears the N5-methylglutamine mark.

This sequence belongs to the prokaryotic/mitochondrial release factor family. In terms of processing, methylated by PrmC. Methylation increases the termination efficiency of RF1.

It localises to the cytoplasm. Functionally, peptide chain release factor 1 directs the termination of translation in response to the peptide chain termination codons UAG and UAA. The chain is Peptide chain release factor 1 from Azotobacter vinelandii (strain DJ / ATCC BAA-1303).